A 193-amino-acid chain; its full sequence is Imidazoleglycerol-phosphate dehydratase (193 aa).

This sequence belongs to the imidazoleglycerol-phosphate dehydratase family.

The protein resides in the cytoplasm. The catalysed reaction is D-erythro-1-(imidazol-4-yl)glycerol 3-phosphate = 3-(imidazol-4-yl)-2-oxopropyl phosphate + H2O. It functions in the pathway amino-acid biosynthesis; L-histidine biosynthesis; L-histidine from 5-phospho-alpha-D-ribose 1-diphosphate: step 6/9. The protein is Imidazoleglycerol-phosphate dehydratase (hisB) of Saccharolobus solfataricus (strain ATCC 35092 / DSM 1617 / JCM 11322 / P2) (Sulfolobus solfataricus).